The primary structure comprises 129 residues: Sulfurtransferase TusD (129 aa).

The active-site Cysteine persulfide intermediate is Cys-79.

The protein belongs to the DsrE/TusD family. As to quaternary structure, heterohexamer, formed by a dimer of trimers. The hexameric TusBCD complex contains 2 copies each of TusB, TusC and TusD. The TusBCD complex interacts with TusE.

The protein localises to the cytoplasm. Its function is as follows. Part of a sulfur-relay system required for 2-thiolation of 5-methylaminomethyl-2-thiouridine (mnm(5)s(2)U) at tRNA wobble positions. Accepts sulfur from TusA and transfers it in turn to TusE. The sequence is that of Sulfurtransferase TusD from Serratia proteamaculans (strain 568).